The sequence spans 227 residues: Cytochrome c oxidase subunit 2 (227 aa).

At 1–14 (MAYPMQLGFQDATS) the chain is on the mitochondrial intermembrane side. Residues 15-45 (PIMEELLHFHDHTLMIVFLISSLVLYVISLM) form a helical membrane-spanning segment. The Mitochondrial matrix portion of the chain corresponds to 46–59 (LTTKLTHTSTMDAQ). The chain crosses the membrane as a helical span at residues 60–87 (EVETIWTILPAIILILIALPSLRILYMM). The Mitochondrial intermembrane portion of the chain corresponds to 88-227 (DEINNPSLTV…YFEKWSASML (140 aa)). 6 residues coordinate Cu cation: histidine 161, cysteine 196, glutamate 198, cysteine 200, histidine 204, and methionine 207. Mg(2+) is bound at residue glutamate 198. At tyrosine 218 the chain carries Phosphotyrosine.

Belongs to the cytochrome c oxidase subunit 2 family. In terms of assembly, component of the cytochrome c oxidase (complex IV, CIV), a multisubunit enzyme composed of 14 subunits. The complex is composed of a catalytic core of 3 subunits MT-CO1, MT-CO2 and MT-CO3, encoded in the mitochondrial DNA, and 11 supernumerary subunits COX4I, COX5A, COX5B, COX6A, COX6B, COX6C, COX7A, COX7B, COX7C, COX8 and NDUFA4, which are encoded in the nuclear genome. The complex exists as a monomer or a dimer and forms supercomplexes (SCs) in the inner mitochondrial membrane with NADH-ubiquinone oxidoreductase (complex I, CI) and ubiquinol-cytochrome c oxidoreductase (cytochrome b-c1 complex, complex III, CIII), resulting in different assemblies (supercomplex SCI(1)III(2)IV(1) and megacomplex MCI(2)III(2)IV(2)). Found in a complex with TMEM177, COA6, COX18, COX20, SCO1 and SCO2. Interacts with TMEM177 in a COX20-dependent manner. Interacts with COX20. Interacts with COX16. It depends on Cu cation as a cofactor.

It localises to the mitochondrion inner membrane. The catalysed reaction is 4 Fe(II)-[cytochrome c] + O2 + 8 H(+)(in) = 4 Fe(III)-[cytochrome c] + 2 H2O + 4 H(+)(out). Its function is as follows. Component of the cytochrome c oxidase, the last enzyme in the mitochondrial electron transport chain which drives oxidative phosphorylation. The respiratory chain contains 3 multisubunit complexes succinate dehydrogenase (complex II, CII), ubiquinol-cytochrome c oxidoreductase (cytochrome b-c1 complex, complex III, CIII) and cytochrome c oxidase (complex IV, CIV), that cooperate to transfer electrons derived from NADH and succinate to molecular oxygen, creating an electrochemical gradient over the inner membrane that drives transmembrane transport and the ATP synthase. Cytochrome c oxidase is the component of the respiratory chain that catalyzes the reduction of oxygen to water. Electrons originating from reduced cytochrome c in the intermembrane space (IMS) are transferred via the dinuclear copper A center (CU(A)) of subunit 2 and heme A of subunit 1 to the active site in subunit 1, a binuclear center (BNC) formed by heme A3 and copper B (CU(B)). The BNC reduces molecular oxygen to 2 water molecules using 4 electrons from cytochrome c in the IMS and 4 protons from the mitochondrial matrix. The sequence is that of Cytochrome c oxidase subunit 2 (MT-CO2) from Rusa unicolor (Sambar).